Here is a 226-residue protein sequence, read N- to C-terminus: Lipoprotein-releasing system ATP-binding protein LolD (226 aa).

Residues 5–225 enclose the ABC transporter domain; it reads FALSNISKFF…EINSCMLSSV (221 aa). 40-47 contacts ATP; the sequence is GRSGSGKS.

Belongs to the ABC transporter superfamily. Lipoprotein translocase (TC 3.A.1.125) family. In terms of assembly, the complex is composed of two ATP-binding proteins (LolD) and two transmembrane proteins (LolC and LolE).

It localises to the cell inner membrane. In terms of biological role, part of the ABC transporter complex LolCDE involved in the translocation of mature outer membrane-directed lipoproteins, from the inner membrane to the periplasmic chaperone, LolA. Responsible for the formation of the LolA-lipoprotein complex in an ATP-dependent manner. This Ehrlichia canis (strain Jake) protein is Lipoprotein-releasing system ATP-binding protein LolD.